The chain runs to 344 residues: Lipase chaperone (344 aa).

A helical transmembrane segment spans residues 14-34 (AVVYGAVGLAAIAGVAMWSGA). A disordered region spans residues 37–78 (HGGTGASGEPPDASAARGPAAAPPQAAVPASTSLPPSLAGSS). The segment covering 43–78 (SGEPPDASAARGPAAAPPQAAVPASTSLPPSLAGSS) has biased composition (low complexity).

It belongs to the lipase chaperone family.

The protein resides in the cell inner membrane. Its function is as follows. May be involved in the folding of the extracellular lipase during its passage through the periplasm. This is Lipase chaperone (lifO) from Burkholderia cepacia (Pseudomonas cepacia).